A 368-amino-acid polypeptide reads, in one-letter code: tRNA-specific 2-thiouridylase MnmA (368 aa).

ATP is bound by residues 10 to 17 and Met36; that span reads AMSGGIDS. The active-site Nucleophile is the Cys106. An intrachain disulfide couples Cys106 to Cys203. An ATP-binding site is contributed by Gly130. The tract at residues 152–154 is interaction with tRNA; the sequence is KDQ. Catalysis depends on Cys203, which acts as the Cysteine persulfide intermediate. The interaction with tRNA stretch occupies residues 313-314; that stretch reads RY.

The protein belongs to the MnmA/TRMU family.

It localises to the cytoplasm. It catalyses the reaction S-sulfanyl-L-cysteinyl-[protein] + uridine(34) in tRNA + AH2 + ATP = 2-thiouridine(34) in tRNA + L-cysteinyl-[protein] + A + AMP + diphosphate + H(+). Catalyzes the 2-thiolation of uridine at the wobble position (U34) of tRNA, leading to the formation of s(2)U34. The chain is tRNA-specific 2-thiouridylase MnmA from Cytophaga hutchinsonii (strain ATCC 33406 / DSM 1761 / CIP 103989 / NBRC 15051 / NCIMB 9469 / D465).